The chain runs to 1382 residues: Hepatocyte growth factor receptor (1382 aa).

A signal peptide spans 1–24 (MRAPAVLAPGILVLLFTLVQRSCG). Topologically, residues 25 to 933 (ECKEALVKSE…VIVQPDQNFT (909 aa)) are extracellular. In terms of domain architecture, Sema spans 27–516 (KEALVKSEMN…TGKKITKIPL (490 aa)). N-linked (GlcNAc...) asparagine glycosylation is present at Asn45. 4 disulfides stabilise this stretch: Cys95-Cys101, Cys98-Cys160, Cys133-Cys141, and Cys173-Cys176. Asn106 carries an N-linked (GlcNAc...) asparagine glycan. 2 N-linked (GlcNAc...) asparagine glycosylation sites follow: Asn203 and Asn359. Disulfide bonds link Cys299–Cys364 and Cys386–Cys398. N-linked (GlcNAc...) asparagine glycans are attached at residues Asn400 and Asn406. 4 cysteine pairs are disulfide-bonded: Cys521-Cys539, Cys527-Cys562, Cys530-Cys546, and Cys542-Cys552. IPT/TIG domains lie at 564 to 656 (PTIY…FSYV), 658 to 740 (PIIT…FSYQ), and 743 to 837 (PIVY…LIYV). The O-linked (Man) threonine glycan is linked to Thr583. N-linked (GlcNAc...) asparagine glycans are attached at residues Asn608 and Asn636. O-linked (Man) threonine glycosylation is found at Thr677 and Thr762. N-linked (GlcNAc...) asparagine glycans are attached at residues Asn786, Asn880, and Asn931. The helical transmembrane segment at 934–956 (GLIVGVISISLIVLLLLGLFLWL) threads the bilayer. The Cytoplasmic segment spans residues 957–1382 (KRRKQIKDLG…QDIIDGEGDT (426 aa)). A Phosphoserine modification is found at Ser967. At Thr978 the chain carries Phosphothreonine. A phosphoserine mark is found at Ser991, Ser998, and Ser1001. Phosphotyrosine is present on Tyr1004. Positions 1079 to 1346 (VHFNEVIGRG…RISAIFSTFI (268 aa)) constitute a Protein kinase domain. ATP contacts are provided by residues 1085–1093 (IGRGHFGCV) and Lys1111. Asp1205 (proton acceptor) is an active-site residue. Residues 1213-1382 (LDEKFTVKVA…QDIIDGEGDT (170 aa)) are interaction with RANBP9. Residue Tyr1231 is modified to Phosphotyrosine. A phosphotyrosine; by autocatalysis mark is found at Tyr1235 and Tyr1236. Position 1290 is a phosphothreonine (Thr1290). The interval 1321-1360 (WHPKAELRPSFSELVSRISAIFSTFIGEHYVHVNATYVNV) is interaction with MUC20. Phosphotyrosine; by autocatalysis occurs at positions 1350 and 1357. Tyr1366 carries the phosphotyrosine modification.

It belongs to the protein kinase superfamily. Tyr protein kinase family. Heterodimer made of an alpha chain (50 kDa) and a beta chain (145 kDa) which are disulfide linked. Binds PLXNB1. Interacts when phosphorylated with downstream effectors including STAT3, PIK3R1, SRC, PCLG1, GRB2 and GAB1. Interacts with SPSB1, SPSB2 and SPSB4. Interacts with INPP5D/SHIP1. When phosphorylated at Tyr-1357, interacts with INPPL1/SHIP2. Interacts with RANBP9 and RANBP10, as well as SPSB1, SPSB2, SPSB3 and SPSB4. SPSB1 binding occurs in the presence and in the absence of HGF, however HGF treatment has a positive effect on this interaction. Interacts with MUC20; prevents interaction with GRB2 and suppresses hepatocyte growth factor-induced cell proliferation. Interacts with GRB10. Interacts with PTPN1 and PTPN2. Interacts with HSP90AA1 and HSP90AB1; the interaction suppresses MET kinase activity. Interacts with tensin TNS3. Interacts (when phosphorylated) with tensin TNS4 (via SH2 domain); the interaction increases MET protein stability by inhibiting MET endocytosis and subsequent lysosomal degradation. Post-translationally, autophosphorylated in response to ligand binding on Tyr-1235 and Tyr-1236 in the kinase domain leading to further phosphorylation of Tyr-1350 and Tyr-1357 in the C-terminal multifunctional docking site. Dephosphorylated by PTPRJ at Tyr-1350 and Tyr-1366. Dephosphorylated by PTPN1 and PTPN2. In terms of processing, ubiquitinated. Ubiquitination by CBL regulates the receptor stability and activity through proteasomal degradation. O-mannosylation of IPT/TIG domains by TMEM260 is required for protein maturation. O-mannosylated residues are composed of single mannose glycans that are not elongated or modified.

The protein resides in the membrane. It carries out the reaction L-tyrosyl-[protein] + ATP = O-phospho-L-tyrosyl-[protein] + ADP + H(+). Its activity is regulated as follows. In its inactive state, the C-terminal tail interacts with the catalytic domain and inhibits the kinase activity. Upon ligand binding, the C-terminal tail is displaced and becomes phosphorylated, thus increasing the kinase activity. In terms of biological role, receptor tyrosine kinase that transduces signals from the extracellular matrix into the cytoplasm by binding to hepatocyte growth factor/HGF ligand. Regulates many physiological processes including proliferation, scattering, morphogenesis and survival. Ligand binding at the cell surface induces autophosphorylation of MET on its intracellular domain that provides docking sites for downstream signaling molecules. Following activation by ligand, interacts with the PI3-kinase subunit PIK3R1, PLCG1, SRC, GRB2, STAT3 or the adapter GAB1. Recruitment of these downstream effectors by MET leads to the activation of several signaling cascades including the RAS-ERK, PI3 kinase-AKT, or PLCgamma-PKC. The RAS-ERK activation is associated with the morphogenetic effects while PI3K/AKT coordinates prosurvival effects. During embryonic development, MET signaling plays a role in gastrulation, development and migration of muscles and neuronal precursors, angiogenesis and kidney formation. In adults, participates in wound healing as well as organ regeneration and tissue remodeling. Also promotes differentiation and proliferation of hematopoietic cells. The polypeptide is Hepatocyte growth factor receptor (MET) (Mustela putorius furo (European domestic ferret)).